The chain runs to 59 residues: Large ribosomal subunit protein bL32 (59 aa).

The segment covering 1 to 16 has biased composition (basic residues); that stretch reads MAVPKRKTSPSKRGMR. A disordered region spans residues 1-59; that stretch reads MAVPKRKTSPSKRGMRRSADALKAPTYVEDKNSGELRRPHHIDLKSGMYRGRQVLEAKE. Basic and acidic residues predominate over residues 28–44; that stretch reads VEDKNSGELRRPHHIDL.

Belongs to the bacterial ribosomal protein bL32 family.

This is Large ribosomal subunit protein bL32 from Brucella anthropi (strain ATCC 49188 / DSM 6882 / CCUG 24695 / JCM 21032 / LMG 3331 / NBRC 15819 / NCTC 12168 / Alc 37) (Ochrobactrum anthropi).